Here is a 198-residue protein sequence, read N- to C-terminus: Pyridoxal 5'-phosphate synthase subunit PdxT (198 aa).

Residue 50-52 (GES) coordinates L-glutamine. C82 acts as the Nucleophile in catalysis. L-glutamine-binding positions include R111 and 140–141 (IR). Residues H177 and E179 each act as charge relay system in the active site.

It belongs to the glutaminase PdxT/SNO family. In terms of assembly, in the presence of PdxS, forms a dodecamer of heterodimers. Only shows activity in the heterodimer.

The catalysed reaction is aldehydo-D-ribose 5-phosphate + D-glyceraldehyde 3-phosphate + L-glutamine = pyridoxal 5'-phosphate + L-glutamate + phosphate + 3 H2O + H(+). It carries out the reaction L-glutamine + H2O = L-glutamate + NH4(+). Its pathway is cofactor biosynthesis; pyridoxal 5'-phosphate biosynthesis. Functionally, catalyzes the hydrolysis of glutamine to glutamate and ammonia as part of the biosynthesis of pyridoxal 5'-phosphate. The resulting ammonia molecule is channeled to the active site of PdxS. The protein is Pyridoxal 5'-phosphate synthase subunit PdxT of Leifsonia xyli subsp. xyli (strain CTCB07).